The following is a 297-amino-acid chain: Small ribosomal subunit protein uS2 (297 aa).

The segment at 276–297 (DWASSAPAEGWAGEAPATEAKW) is disordered.

It belongs to the universal ribosomal protein uS2 family. As to quaternary structure, component of the small ribosomal subunit. Mature ribosomes consist of a small (40S) and a large (60S) subunit. The 40S subunit contains about 33 different proteins and 1 molecule of RNA (18S). The 60S subunit contains about 49 different proteins and 3 molecules of RNA (25S, 5.8S and 5S). Interacts with RPS21.

Its subcellular location is the cytoplasm. Functionally, required for the assembly and/or stability of the 40S ribosomal subunit. Required for the processing of the 20S rRNA-precursor to mature 18S rRNA in a late step of the maturation of 40S ribosomal subunits. The sequence is that of Small ribosomal subunit protein uS2 from Uncinocarpus reesii (strain UAMH 1704).